Consider the following 179-residue polypeptide: Inner membrane-spanning protein YciB (179 aa).

5 helical membrane passes run 22–42 (IYAA…YSWV), 50–70 (MALI…FFHN), 76–96 (WKVT…QWVM), 121–141 (LAWA…AFWL), and 149–169 (FKVF…GIYI).

The protein belongs to the YciB family.

It is found in the cell inner membrane. In terms of biological role, plays a role in cell envelope biogenesis, maintenance of cell envelope integrity and membrane homeostasis. This Klebsiella pneumoniae subsp. pneumoniae (strain ATCC 700721 / MGH 78578) protein is Inner membrane-spanning protein YciB.